The sequence spans 483 residues: Isocitrate dehydrogenase [NADP] (483 aa).

Threonine 74 lines the NADP(+) pocket. Residues serine 83, asparagine 85, arginine 89, arginine 99, and arginine 121 each contribute to the D-threo-isocitrate site. Position 232 (aspartate 232) interacts with Mg(2+). NADP(+) contacts are provided by residues 264–270 (HGSAPDI) and asparagine 277.

The protein belongs to the isocitrate and isopropylmalate dehydrogenases family. As to quaternary structure, homodimer. Requires Mg(2+) as cofactor. Mn(2+) serves as cofactor.

It catalyses the reaction D-threo-isocitrate + NADP(+) = 2-oxoglutarate + CO2 + NADPH. In terms of biological role, catalyzes the oxidative decarboxylation of isocitrate to 2-oxoglutarate and carbon dioxide with the concomitant reduction of NADP(+). This chain is Isocitrate dehydrogenase [NADP] (icd), found in Rickettsia typhi (strain ATCC VR-144 / Wilmington).